Reading from the N-terminus, the 591-residue chain is L-fucose isomerase (591 aa).

Residues Glu337 and Asp361 each act as proton acceptor in the active site. Mn(2+) contacts are provided by Glu337, Asp361, and His528.

It belongs to the L-fucose isomerase family. Homohexamer. Mn(2+) is required as a cofactor.

It localises to the cytoplasm. The catalysed reaction is L-fucose = L-fuculose. It participates in carbohydrate degradation; L-fucose degradation; L-lactaldehyde and glycerone phosphate from L-fucose: step 1/3. Converts the aldose L-fucose into the corresponding ketose L-fuculose. This Escherichia coli (strain SMS-3-5 / SECEC) protein is L-fucose isomerase.